A 168-amino-acid chain; its full sequence is Large ribosomal subunit protein uL24 (168 aa).

Residues 112 to 168 form a disordered region; the sequence is LEGKDPRKQPKEAPKAAEKPAKEEPKKETPKAEEKPAKEEPKETKVEKKSEEKEDEN.

This sequence belongs to the universal ribosomal protein uL24 family. In terms of assembly, part of the 50S ribosomal subunit.

Functionally, one of two assembly initiator proteins, it binds directly to the 5'-end of the 23S rRNA, where it nucleates assembly of the 50S subunit. Located at the polypeptide exit tunnel on the outside of the subunit. The chain is Large ribosomal subunit protein uL24 from Nitrosopumilus maritimus (strain SCM1).